The sequence spans 145 residues: Protein SprT-like (145 aa).

A SprT-like domain is found at 4-140 (TNYVQEVSLA…VCGNCHGKLM (137 aa)). Histidine 64 provides a ligand contact to Zn(2+). Residue glutamate 65 is part of the active site. Histidine 68 serves as a coordination point for Zn(2+).

Belongs to the SprT family. Requires Zn(2+) as cofactor.

Its subcellular location is the cytoplasm. In Streptococcus pyogenes serotype M3 (strain SSI-1), this protein is Protein SprT-like.